Here is a 314-residue protein sequence, read N- to C-terminus: Dual specificity protein phosphatase 2 (314 aa).

In terms of domain architecture, Rhodanese spans 23–144 (EAERTLLLDC…FQGCCPDLCS (122 aa)). The Tyrosine-protein phosphatase domain occupies 172-313 (GPVEILPYLF…LLQFETQVLC (142 aa)). C257 (phosphocysteine intermediate) is an active-site residue.

Belongs to the protein-tyrosine phosphatase family. Non-receptor class dual specificity subfamily. Interacts with MAPK14; this interaction does not lead to catalytic activation of DUSP2 and dephosphrylation of MAPK14. Expressed in hematopoietic tissues.

It is found in the nucleus. The catalysed reaction is O-phospho-L-tyrosyl-[protein] + H2O = L-tyrosyl-[protein] + phosphate. It carries out the reaction O-phospho-L-threonyl-[protein] + H2O = L-threonyl-[protein] + phosphate. Dephosphorylates both phosphorylated Thr and Tyr residues in MAPK1, and dephosphorylation of phosphotyrosine is slightly faster than that of phosphothreonine. Can dephosphorylate MAPK1. This Homo sapiens (Human) protein is Dual specificity protein phosphatase 2.